A 104-amino-acid chain; its full sequence is UPF0145 protein Hlac_1015 (104 aa).

The protein belongs to the UPF0145 family.

This chain is UPF0145 protein Hlac_1015, found in Halorubrum lacusprofundi (strain ATCC 49239 / DSM 5036 / JCM 8891 / ACAM 34).